Reading from the N-terminus, the 260-residue chain is Carbonic anhydrase 2 (260 aa).

At Ser2 the chain carries N-acetylserine. At Ser2 the chain carries Phosphoserine. Residues 3–259 enclose the Alpha-carbonic anhydrase domain; sequence HHWGYSKHNG…LKNRKIKASF (257 aa). His64 serves as the catalytic Proton acceptor. Asn67 is a catalytic residue. At Ser87 the chain carries Phosphoserine. Positions 94, 96, and 119 each coordinate Zn(2+). The active site involves Tyr127. Ser165 carries the post-translational modification Phosphoserine. Residue 198 to 199 participates in substrate binding; it reads TT.

Belongs to the alpha-carbonic anhydrase family. As to quaternary structure, interacts with SLC4A4. Interaction with SLC4A7 regulates SLC4A7 transporter activity. Interacts with SLC26A6. Zn(2+) serves as cofactor.

The protein localises to the cytoplasm. Its subcellular location is the cell membrane. The enzyme catalyses hydrogencarbonate + H(+) = CO2 + H2O. The catalysed reaction is urea = cyanamide + H2O. With respect to regulation, inhibited by acetazolamide. Its function is as follows. Catalyzes the reversible hydration of carbon dioxide. Can also hydrate cyanamide to urea. Involved in the regulation of fluid secretion into the anterior chamber of the eye. Essential for bone resorption and osteoclast differentiation. Contributes to intracellular pH regulation in the duodenal upper villous epithelium during proton-coupled peptide absorption. Stimulates the chloride-bicarbonate exchange activity of SLC26A6. In Mus musculus (Mouse), this protein is Carbonic anhydrase 2 (Ca2).